Reading from the N-terminus, the 226-residue chain is 2-C-methyl-D-erythritol 4-phosphate cytidylyltransferase (226 aa).

The protein belongs to the IspD/TarI cytidylyltransferase family. IspD subfamily.

The catalysed reaction is 2-C-methyl-D-erythritol 4-phosphate + CTP + H(+) = 4-CDP-2-C-methyl-D-erythritol + diphosphate. It participates in isoprenoid biosynthesis; isopentenyl diphosphate biosynthesis via DXP pathway; isopentenyl diphosphate from 1-deoxy-D-xylulose 5-phosphate: step 2/6. In terms of biological role, catalyzes the formation of 4-diphosphocytidyl-2-C-methyl-D-erythritol from CTP and 2-C-methyl-D-erythritol 4-phosphate (MEP). This is 2-C-methyl-D-erythritol 4-phosphate cytidylyltransferase from Bacillus thuringiensis (strain Al Hakam).